A 68-amino-acid chain; its full sequence is UPF0435 protein SAOUHSC_02093 (68 aa).

This sequence belongs to the UPF0435 family.

This Staphylococcus aureus (strain NCTC 8325 / PS 47) protein is UPF0435 protein SAOUHSC_02093.